Here is a 308-residue protein sequence, read N- to C-terminus: Isoaspartyl peptidase/L-asparaginase (308 aa).

Met-1 carries the N-acetylmethionine modification. Residue Thr-168 is the Nucleophile of the active site. Residues 196–199 and 219–222 each bind substrate; these read RVGD and TGHG.

Belongs to the Ntn-hydrolase family. Heterodimer of an alpha and beta chain produced by autocleavage. This heterodimer may then dimerize in turn, giving rise to a heterotetramer. Post-translationally, cleaved into an alpha and beta chain by autocatalysis; this activates the enzyme. The N-terminal residue of the beta subunit is responsible for the nucleophile hydrolase activity.

The protein localises to the cytoplasm. It catalyses the reaction L-asparagine + H2O = L-aspartate + NH4(+). It carries out the reaction Cleavage of a beta-linked Asp residue from the N-terminus of a polypeptide.. In terms of biological role, has both L-asparaginase and beta-aspartyl peptidase activity. May be involved in the production of L-aspartate, which can act as an excitatory neurotransmitter in some brain regions. Is highly active with L-Asp beta-methyl ester. Besides, has catalytic activity toward beta-aspartyl dipeptides and their methyl esters, including beta-L-Asp-L-Phe, beta-L-Asp-L-Phe methyl ester (aspartame), beta-L-Asp-L-Ala, beta-L-Asp-L-Leu and beta-L-Asp-L-Lys. Does not have aspartylglucosaminidase activity and is inactive toward GlcNAc-L-Asn. Likewise, has no activity toward glutamine. The polypeptide is Isoaspartyl peptidase/L-asparaginase (ASRGL1) (Bos taurus (Bovine)).